The sequence spans 392 residues: Elongation factor Tu (392 aa).

A tr-type G domain is found at 10–202 (KVHVNVGTIG…VLDEYIEDPI (193 aa)). Positions 19 to 26 (GHVDHGKT) are G1. 19–26 (GHVDHGKT) contributes to the GTP binding site. Thr-26 provides a ligand contact to Mg(2+). Residues 60–64 (GITIN) form a G2 region. Residues 81–84 (DCPG) are G3. GTP contacts are provided by residues 81-85 (DCPGH) and 136-139 (NKCD). The tract at residues 136–139 (NKCD) is G4. The G5 stretch occupies residues 174–176 (SAL).

Belongs to the TRAFAC class translation factor GTPase superfamily. Classic translation factor GTPase family. EF-Tu/EF-1A subfamily. In terms of assembly, monomer.

It localises to the cytoplasm. The enzyme catalyses GTP + H2O = GDP + phosphate + H(+). Its function is as follows. GTP hydrolase that promotes the GTP-dependent binding of aminoacyl-tRNA to the A-site of ribosomes during protein biosynthesis. This chain is Elongation factor Tu, found in Apple proliferation phytoplasma.